The following is a 347-amino-acid chain: Cell shape-determining protein MreB (347 aa).

ATP contacts are provided by residues 19–21, 168–170, 216–219, and 296–299; these read TAN, GGT, ERIK, and GGAL.

The protein belongs to the FtsA/MreB family. Forms polymers.

The protein localises to the cytoplasm. Forms membrane-associated dynamic filaments that are essential for cell shape determination. Acts by regulating cell wall synthesis and cell elongation, and thus cell shape. A feedback loop between cell geometry and MreB localization may maintain elongated cell shape by targeting cell wall growth to regions of negative cell wall curvature. In Escherichia coli O6:H1 (strain CFT073 / ATCC 700928 / UPEC), this protein is Cell shape-determining protein MreB.